A 67-amino-acid polypeptide reads, in one-letter code: DNA gyrase inhibitor YacG (67 aa).

Positions 10, 13, 29, and 33 each coordinate Zn(2+).

Belongs to the DNA gyrase inhibitor YacG family. As to quaternary structure, interacts with GyrB. The cofactor is Zn(2+).

Inhibits all the catalytic activities of DNA gyrase by preventing its interaction with DNA. Acts by binding directly to the C-terminal domain of GyrB, which probably disrupts DNA binding by the gyrase. The chain is DNA gyrase inhibitor YacG from Pasteurella multocida (strain Pm70).